Here is a 218-residue protein sequence, read N- to C-terminus: DNA-directed RNA polymerases IV and V subunit 5B (218 aa).

The protein belongs to the archaeal Rpo5/eukaryotic RPB5 RNA polymerase subunit family. In terms of assembly, component of the RNA polymerase IV and V complexes. Interacts with NRPD1. As to expression, expressed inleaves, flower buds, flowers and siliques.

It localises to the nucleus. Functionally, DNA-dependent RNA polymerase catalyzes the transcription of DNA into RNA using the four ribonucleoside triphosphates as substrates. Component of RNA polymerases IV and V which mediate short-interfering RNAs (siRNA) accumulation and subsequent RNA-directed DNA methylation-dependent (RdDM) transcriptional gene silencing (TGS) of endogenous repeated sequences, including transposable elements. The polypeptide is DNA-directed RNA polymerases IV and V subunit 5B (NRPD5B) (Arabidopsis thaliana (Mouse-ear cress)).